Reading from the N-terminus, the 372-residue chain is 4-hydroxy-3-methylbut-2-en-1-yl diphosphate synthase (flavodoxin) (372 aa).

C270, C273, C305, and E312 together coordinate [4Fe-4S] cluster.

This sequence belongs to the IspG family. [4Fe-4S] cluster is required as a cofactor.

It catalyses the reaction (2E)-4-hydroxy-3-methylbut-2-enyl diphosphate + oxidized [flavodoxin] + H2O + 2 H(+) = 2-C-methyl-D-erythritol 2,4-cyclic diphosphate + reduced [flavodoxin]. Its pathway is isoprenoid biosynthesis; isopentenyl diphosphate biosynthesis via DXP pathway; isopentenyl diphosphate from 1-deoxy-D-xylulose 5-phosphate: step 5/6. Converts 2C-methyl-D-erythritol 2,4-cyclodiphosphate (ME-2,4cPP) into 1-hydroxy-2-methyl-2-(E)-butenyl 4-diphosphate. In Alcanivorax borkumensis (strain ATCC 700651 / DSM 11573 / NCIMB 13689 / SK2), this protein is 4-hydroxy-3-methylbut-2-en-1-yl diphosphate synthase (flavodoxin).